A 215-amino-acid polypeptide reads, in one-letter code: Nucleoside triphosphate pyrophosphatase (215 aa).

The Proton acceptor role is filled by D77.

This sequence belongs to the Maf family. A divalent metal cation serves as cofactor.

The protein resides in the cytoplasm. The catalysed reaction is a ribonucleoside 5'-triphosphate + H2O = a ribonucleoside 5'-phosphate + diphosphate + H(+). It carries out the reaction a 2'-deoxyribonucleoside 5'-triphosphate + H2O = a 2'-deoxyribonucleoside 5'-phosphate + diphosphate + H(+). Functionally, nucleoside triphosphate pyrophosphatase. May have a dual role in cell division arrest and in preventing the incorporation of modified nucleotides into cellular nucleic acids. The polypeptide is Nucleoside triphosphate pyrophosphatase (Rickettsia africae (strain ESF-5)).